The primary structure comprises 486 residues: Elastin-binding protein EbpS (486 aa).

Residues 1–40 are compositionally biased toward basic and acidic residues; that stretch reads MSNNFKDDFEKNRQSIDTNSHQDHTEDVEKDQSELEHQDT. The segment at 1–314 is disordered; it reads MSNNFKDDFE…NHDRDKERKK (314 aa). The Extracellular segment spans residues 2–204; that stretch reads SNNFKDDFEK…ESKDHHSGKK (203 aa). The tract at residues 14–34 is elastin-binding; sequence QSIDTNSHQDHTEDVEKDQSE. The segment covering 64–85 has biased composition (polar residues); that stretch reads TNHNKQVHNESQTSEDNVQNEA. Basic and acidic residues-rich tracts occupy residues 103-118, 126-160, and 180-199; these read EPSH…EEYY, DKSH…KSEA, and SKDK…SKDH. Low complexity-rich tracts occupy residues 204–225 and 233–246; these read KGAA…MGVS and DAQN…SNNS. The helical transmembrane segment at 205-225 threads the bilayer; sequence GAAIGAGTAGVAGAAGAMGVS. Residues 226 to 319 are Cytoplasmic-facing; that stretch reads KAKKHSNDAQ…KERKKGGMAK (94 aa). Residues 247 to 259 show a composition bias toward basic and acidic residues; that stretch reads TEDKVSQDKSKDH. Over residues 278-297 the composition is skewed to low complexity; sequence GAASKSASAASKPHASNNAS. Positions 299-314 are enriched in basic and acidic residues; it reads NHDEHDNHDRDKERKK. A helical membrane pass occupies residues 320–340; it reads VLLPLIAAVLIIGALAIFGGM. Over 341–486 the chain is Extracellular; sequence ALNNHNNGTK…IRNGQQIVIP (146 aa). A disordered region spans residues 351–440; the sequence is ENKIANTNKN…QRQGGGQRHT (90 aa). Residues 361-398 are compositionally biased toward basic and acidic residues; it reads NADESKDKDTSKDASKDKSKSTDSDKSKEDQDKATKDE. Over residues 403–431 the composition is skewed to low complexity; the sequence is QNNANQANNQAQNNQNQQQANQNQQQQQQ. Positions 437-485 constitute a LysM domain; the sequence is QRHTVNGQENLYRIAIQYYGSGSPENVEKIRRANGLSGNNIRNGQQIVI.

The protein localises to the cell membrane. Functionally, promotes binding of soluble elastin peptides and tropoelastin to S.aureus cells although it is not able to promote bacterial adherence to immobilized elastin and, therefore, is not a microbial surface component recognizing adhesive matrix molecule (MSCRAMM). The polypeptide is Elastin-binding protein EbpS (ebpS) (Staphylococcus aureus (strain MSSA476)).